A 368-amino-acid polypeptide reads, in one-letter code: Endophilin-A2 (368 aa).

The segment at 1-21 (MSVAGLKKQFYKASQLVSEKV) is membrane-binding amphipathic helix. The BAR domain maps to 18-249 (SEKVGGAEGT…LKRRMREASS (232 aa)). Residues 60–87 (PNPASRAKLTMLNTVSKIRGQVKNPGYP) are required for dimerization upon membrane association. Residues 145-250 (NLCEKDLKEI…KRRMREASSR (106 aa)) adopt a coiled-coil conformation. Positions 218–254 (LVDAQLDYHRQAVQILDELAEKLKRRMREASSRPKRE) are interaction with ARC. The tract at residues 244 to 308 (MREASSRPKR…PSRSMPPLDQ (65 aa)) is disordered. The span at 245–263 (REASSRPKREYKPKPREPF) shows a compositional bias: basic and acidic residues. 2 positions are modified to phosphoserine: serine 288 and serine 292. A Phosphothreonine modification is found at threonine 298. The region spanning 306–365 (LDQPSCKALYDFEPENDGELGFHEGDVITLTNQIDENWYEGMLDGQSGFFPLSYVEVLVP) is the SH3 domain. At tyrosine 315 the chain carries Phosphotyrosine.

The protein belongs to the endophilin family. Interacts with ARC. Interacts with SYNJ1 and DNM1. Interacts with PDCD6IP. Interacts with BIN2. Ubiquitous. Higher expression in pancreas, placenta, prostate, testis and uterus.

It is found in the cytoplasm. Its subcellular location is the early endosome membrane. The protein resides in the cell projection. It localises to the podosome. Its function is as follows. Implicated in endocytosis. May recruit other proteins to membranes with high curvature. This Homo sapiens (Human) protein is Endophilin-A2 (SH3GL1).